The following is a 443-amino-acid chain: MARQNRFDRTSFQTQIIDLSHDGRGVARPHGEGGKVTFVTGALPGEVVIVEPVARNRHFDEARVVEVLQASPQRVIPRCSHFGVCSGCVLQHLAEDAQVVSKQRVLLESLERIGCVSPERVLPALAAESWGYRRKGRFSVRWVEKKGRTLVGFREHDPRFVADVSVCHTVVPQVGEKIALLATLLDSLDGRCDVPQIEFIAGDAVVALTVRHLQPLSEADRLALIEFGKEHGIAIFLQSGGVESVRLLWPDEVLLAFRLKPWDVEFVFRPLDFIQINGGLNEKMIAHALDLLGAGFGERVLDLFCGLGNFTLPLARTVGEVVGVEGDIGLVERARENARRNGLGNAEFFVADLTRDQRDAPWMRQGFDKLLLDPPRSGAIEVLKQLPLKMFERIVYVSCHPGSLARDADFLVNEQGFVLRAVGAMDMFPHTAHVESIAVFDRC.

Residues 4–66 form the TRAM domain; the sequence is QNRFDRTSFQ…RHFDEARVVE (63 aa). Residues C79, C85, C88, and C167 each coordinate [4Fe-4S] cluster. Residues Q275, F304, N309, E325, D352, and D373 each coordinate S-adenosyl-L-methionine. Residue C399 is the Nucleophile of the active site.

It belongs to the class I-like SAM-binding methyltransferase superfamily. RNA M5U methyltransferase family. RlmD subfamily.

It carries out the reaction uridine(1939) in 23S rRNA + S-adenosyl-L-methionine = 5-methyluridine(1939) in 23S rRNA + S-adenosyl-L-homocysteine + H(+). Catalyzes the formation of 5-methyl-uridine at position 1939 (m5U1939) in 23S rRNA. This is 23S rRNA (uracil(1939)-C(5))-methyltransferase RlmD from Xylella fastidiosa (strain Temecula1 / ATCC 700964).